The sequence spans 204 residues: 34 kDa membrane antigen (204 aa).

The first 19 residues, 1-19, serve as a signal peptide directing secretion; sequence MKRVSLLGSAAIFALVFSA. Cysteine 20 carries N-palmitoyl cysteine lipidation. Cysteine 20 carries S-diacylglycerol cysteine lipidation.

It belongs to the UPF0423 family.

It is found in the cell membrane. This antigen is a pathogen-specific membrane immunogen. This is 34 kDa membrane antigen (tpd) from Treponema pallidum (strain Nichols).